A 231-amino-acid polypeptide reads, in one-letter code: Large ribosomal subunit protein uL1 (231 aa).

It belongs to the universal ribosomal protein uL1 family. As to quaternary structure, part of the 50S ribosomal subunit.

In terms of biological role, binds directly to 23S rRNA. The L1 stalk is quite mobile in the ribosome, and is involved in E site tRNA release. Protein L1 is also a translational repressor protein, it controls the translation of the L11 operon by binding to its mRNA. The sequence is that of Large ribosomal subunit protein uL1 from Stutzerimonas stutzeri (strain A1501) (Pseudomonas stutzeri).